Consider the following 123-residue polypeptide: Guanine nucleotide exchange factor MSS4 (123 aa).

Met1 bears the N-acetylmethionine mark. The 115-residue stretch at 9–123 folds into the MSS4 domain; it reads ELVSAEGRNR…YVALERVSHE (115 aa). 4 residues coordinate Zn(2+): Cys23, Cys26, Cys94, and Cys97.

This sequence belongs to the DSS4/MSS4 family. In terms of assembly, interacts with RAB8A. Ubiquitous.

Functionally, guanine-nucleotide-releasing protein that acts on members of the SEC4/YPT1/RAB subfamily. Stimulates GDP release from both YPT1, RAB3A and RAB10, but is less active on these proteins than on the SEC4 protein. Might play a general role in vesicular transport. The sequence is that of Guanine nucleotide exchange factor MSS4 (Rabif) from Rattus norvegicus (Rat).